Reading from the N-terminus, the 165-residue chain is Type 3 secretion system regulator YopR (165 aa).

The protein belongs to the YopR family.

The protein localises to the secreted. Functionally, may be involved in the regulation of the assembly of the type III secretion system (T3SS), also called injectisome, which is used to inject bacterial effector proteins into eukaryotic host cells. May control the secretion and/or polymerization of YscF/SctF, the principal component of the needle filament, thereby impacting the assembly of the T3SS. Involved in pathogenesis. This is Type 3 secretion system regulator YopR from Yersinia pseudotuberculosis serotype I (strain IP32953).